Reading from the N-terminus, the 415-residue chain is MNSNSIQSFDALPHNLRECFLDMASFLEDQRIIASTIIDLWSASYGKEGMNNLQDLASRNLLKLLPIGRNEYEDGFYNELLVKQDNVLREFAINQCLKESSSIFERKRLNLEIQDNKFPNWCLNPKQPIVINASLFSISTDDSFASSWFEMDCPNVEALVLNISSSNYALPNFIATMKELKVVIIINHGLEPAKLTNLSCLSSLPNLKRIRFEKVSISLLDIPKLGLKSLEKLSLWFCHVVDALNELEDVSETLQSLQEIEIDYCYNLDELPYWISQVVSLKKLSVTNCNKLCRVIEAIGDLRDLETLRLSSCASLLELPETIDRLDNLRFLDVSGGFQLKNLPLEIGKLKKLEKISMKDCYRCELPDSVKNLENLEVKCDEDTAFLWKILKPEMKNLTITEEKTEHNLNLLQLF.

Residues 8–43 (SFDALPHNLRECFLDMASFLEDQRIIASTIIDLWSA) form the NB-ARC domain. 6 LRR repeats span residues 229–251 (SLEK…EDVS), 256–278 (SLQE…ISQV), 280–303 (SLKK…GDLR), 304–326 (DLET…IDRL), 328–351 (NLRF…GKLK), and 352–373 (KLEK…VKNL). Residues 239 to 260 (HVVDALNELEDVSETLQSLQEI) are a coiled coil.

Belongs to the disease resistance NB-LRR family.

Its function is as follows. Possible disease resistance protein. The protein is Probable disease resistance protein At5g66890 of Arabidopsis thaliana (Mouse-ear cress).